The primary structure comprises 679 residues: Enzymatic polyprotein (679 aa).

The segment at 40–130 (LHCFVDTGAS…LYEPFIQFTD (91 aa)) is protease. Residue Asp45 is part of the active site. Positions 272–452 (LKVIKPSKSP…KKINFLGLEI (181 aa)) constitute a Reverse transcriptase domain.

The protein belongs to the caulimoviridae enzymatic polyprotein family.

The enzyme catalyses DNA(n) + a 2'-deoxyribonucleoside 5'-triphosphate = DNA(n+1) + diphosphate. Its function is as follows. Encodes for at least two polypeptides: protease (PR) and reverse transcriptase (RT). The protease processes the polyprotein in cis. Reverse transcriptase is multifunctional enzyme that converts the viral RNA genome into dsDNA in viral cytoplasmic capsids. This enzyme displays a DNA polymerase activity that can copy either DNA or RNA templates, and a ribonuclease H (RNase H) activity that cleaves the RNA strand of RNA-DNA heteroduplexes in a partially processive 3'- to 5'-endonucleasic mode. Neo-synthesized pregenomic RNA (pgRNA) are encapsidated, and reverse-transcribed inside the nucleocapsid. Partial (+)DNA is synthesized from the (-)DNA template and generates the relaxed circular DNA (RC-DNA) genome. After budding and infection, the RC-DNA migrates in the nucleus, and is converted into a plasmid-like covalently closed circular DNA (cccDNA). In Cauliflower mosaic virus (strain BBC) (CaMV), this protein is Enzymatic polyprotein.